Here is a 426-residue protein sequence, read N- to C-terminus: uncharacterized protein (426 aa).

Positions 17-114 (KRDRPFSPDR…PDKKGEYIYP (98 aa)) are disordered.

It is found in the plastid. This is an uncharacterized protein from Euglena longa (Euglenophycean alga).